The chain runs to 486 residues: Monocarboxylate transporter 12 (486 aa).

Residues 1 to 9 are Cytoplasmic-facing; that stretch reads MTKITRVSL. 12 helical membrane passes run 10-30, 58-78, 86-106, 115-135, 148-168, 177-197, 253-273, 289-309, 320-340, 353-373, 383-403, and 410-430; these read ASPP…LVTI, AWIH…GSVV, AGIM…SFAT, LGVL…AMVG, IAMS…QLLI, LLIL…MRPI, FVVL…LFVY, AFLM…FGWL, YVCY…LPML, FGYF…EIVG, VVYF…GWLV, and TAAF…LGFV. The Cytoplasmic portion of the chain corresponds to 431–486; that stretch reads RIVKRMKRTQVPFPVKDSDPKLQLWTNGSVAYSVARELDQKDEEPLPKARSGCNLT.

Belongs to the major facilitator superfamily. Monocarboxylate porter (TC 2.A.1.13) family. In terms of assembly, interacts with isoform 2 of BSG; this interaction is required for its localization to the plasma membrane. Highly expressed in the lung, liver, kidney, and pancreas. Expressed in eye lens.

It is found in the cell membrane. The protein localises to the basolateral cell membrane. The enzyme catalyses creatine(in) = creatine(out). The catalysed reaction is guanidinoacetate(in) = guanidinoacetate(out). Its activity is regulated as follows. Creatine uptake is inhibited by carbonyl cyanide 3-chlorophenylhydrazone (CCCP) and by valinomycin. Functions as a transporter for creatine and as well for its precursor guanidinoacetate. Transport of creatine and GAA is independent of resting membrane potential and extracellular Na(+), Cl(-), or pH. Contributes to the process of creatine biosynthesis and distribution. The sequence is that of Monocarboxylate transporter 12 from Mus musculus (Mouse).